The chain runs to 543 residues: Mannuronan C5-epimerase (543 aa).

The N-terminal stretch at 1–35 (MPDISLSIPRRRLPRLRPLAAAVLGAVLLHGQAWA) is a signal peptide. 7 PbH1 repeats span residues 243-270 (GAEVYLSNSTFTSFGYNASKAYGISISQ), 283-304 (RPKGWVIDSTIVDSWYGFYCYE), 305-327 (ADDLVVKGNTYRDNIVYGIDPHD), 329-352 (SHRLIIADNTVHGTRKKHGIIVSR), 354-376 (VNDSFIFNNRSYENKLSGIVLDR), 378-400 (SEGNLVAYNEVYRNHSDGITLYE), and 401-423 (SGDNLLWGNQVLANRRHGIRVRN). The active-site Proton acceptor is H326.

It belongs to the D-mannuronate C5-epimerase family.

It localises to the periplasm. It catalyses the reaction [(1-&gt;4)-beta-D-mannuronosyl](n) = [alginate](n). It participates in glycan biosynthesis; alginate biosynthesis. Inhibited by the presence of acetyl groups on the substrate. Catalyzes the epimerization of beta-D-mannuronate to alpha-L-guluronate during the synthesis of the linear polysaccharide alginate. In addition, is part of a periplasmic protein complex that protects alginate from degradation by AlgL by channeling the newly formed alginate polymer through a scaffold that transfers the alginate polymer through the periplasmic space to the outer membrane secretin AlgE. This is Mannuronan C5-epimerase from Pseudomonas aeruginosa (strain ATCC 15692 / DSM 22644 / CIP 104116 / JCM 14847 / LMG 12228 / 1C / PRS 101 / PAO1).